The following is a 192-amino-acid chain: Acetyltransferase PA3944 (192 aa).

The 170-residue stretch at leucine 18–alanine 187 folds into the N-acetyltransferase domain. CoA contacts are provided by residues tryptophan 105 to leucine 107, glycine 113, asparagine 145, and glycine 150 to methionine 152.

In terms of biological role, catalyzes the transfer of an acetyl group from acetyl coenzyme A (AcCoA) to an acceptor substrate and releases both CoA and the acetylated product. It prefers the peptide Asp-Phe methyl ester (or aspartame) and the peptide antibiotics polymyxin B and colistin. Other substrates like dopamine, serotonin, puromycin, chloramphenicol, D-glucosamine, glycine and N-alpha-acetyl-L-glutamine are used and displayed lower activity. The polypeptide is Acetyltransferase PA3944 (Pseudomonas aeruginosa (strain ATCC 15692 / DSM 22644 / CIP 104116 / JCM 14847 / LMG 12228 / 1C / PRS 101 / PAO1)).